A 242-amino-acid chain; its full sequence is ADP-dependent L-serine kinase SerK (242 aa).

The active site involves E30. S43, I49, W51, and K52 together coordinate ADP. Residue V68 coordinates O-phospho-L-serine. Residues D69, G70, H71, H72, and R73 each coordinate ADP. Position 69 (D69) interacts with Mg(2+). O-phospho-L-serine contacts are provided by G70, H71, and H72. W102, K221, T223, and H225 together coordinate O-phospho-L-serine.

It belongs to the SerK family. It depends on Mg(2+) as a cofactor.

It catalyses the reaction L-serine + ADP = O-phospho-L-serine + AMP + H(+). It functions in the pathway amino-acid biosynthesis; L-cysteine biosynthesis; L-cysteine from L-serine: step 1/2. Its function is as follows. Free serine kinase that uses ADP to phosphorylate L-serine to yield O-phospho-L-serine and AMP. This Thermococcus kodakarensis (strain ATCC BAA-918 / JCM 12380 / KOD1) (Pyrococcus kodakaraensis (strain KOD1)) protein is ADP-dependent L-serine kinase SerK.